The chain runs to 276 residues: Carboxysome assembly protein CcmO (276 aa).

BMC domains lie at 16–100 and 120–204; these read ALGV…AVLP and AIGL…DSLP. Disordered regions lie at residues 200 to 219 and 252 to 276; these read MDSL…LQLP and QSAL…RDDQ.

The protein belongs to the bacterial microcompartments protein family. As to quaternary structure, homooligomerizes, possibly as a trimer, interacts with CcmK2 in the carboxysome.

It localises to the carboxysome. In terms of biological role, required for formation of the carboxysome, a polyhedral inclusion where RuBisCO (ribulose bisphosphate carboxylase, rbcL-rbcS) is sequestered. Required for recruitment of major shell protein CcmK2 to the pre-carboxysome. Suggested to be a carboxysome shell protein, but it is not detected in gels, mass spectrometry or by protein sequencing. Functionally, beta-carboxysome assembly initiates when soluble RuBisCO is condensed into a liquid matrix in a pre-carboxysome by the RbcS-like domains of probably both CcmM58 and CcmM35. CcmN interacts with the N-terminus of CcmM58, and then recruits the CcmK2 major shell protein via CcmN's encapsulation peptide. Shell formation requires CcmK proteins and CcmO. CcmL caps the otherwise elongated carboxysome. Once fully encapsulated carboxysomes are formed, they migrate within the cell probably via interactions with the cytoskeleton. This chain is Carboxysome assembly protein CcmO, found in Synechococcus elongatus (strain ATCC 33912 / PCC 7942 / FACHB-805) (Anacystis nidulans R2).